Consider the following 274-residue polypeptide: HTH-type transcriptional regulator GadX (274 aa).

The region spanning 145–242 (TRVCTVINNN…GMTPTEYQER (98 aa)) is the HTH araC/xylS-type domain. DNA-binding regions (H-T-H motif) lie at residues 162–183 (ARIASELLMSPSLLKKKLREEE) and 209–232 (IKRVAVSCGYHSVSYFIYVFRNYY).

As to quaternary structure, homodimer.

Its function is as follows. Positively regulates the expression of about fifteen genes involved in acid resistance such as gadA, gadB and gadC. Depending on the conditions (growth phase and medium), can repress gadW. This Escherichia coli (strain K12) protein is HTH-type transcriptional regulator GadX (gadX).